A 20-amino-acid polypeptide reads, in one-letter code: Thylakoid lumenal 20 kDa protein (20 aa).

The tract at residues 1–20 (RDVDVGSFLPKSPSDPSMVL) is disordered.

It is found in the plastid. Its subcellular location is the chloroplast thylakoid lumen. The chain is Thylakoid lumenal 20 kDa protein from Spinacia oleracea (Spinach).